A 251-amino-acid chain; its full sequence is Derlin-1 (251 aa).

An N-acetylserine modification is found at serine 2. At 2–15 (SDIGDWFRSIPAIT) the chain is on the cytoplasmic side. A helical membrane pass occupies residues 16 to 31 (RYWFAATVAVPLVGKL). Topologically, residues 32-69 (GLISPAYLFLWPEAFLYRFQIWRPITATFYFPVGPGTG) are lumenal. A helical membrane pass occupies residues 70 to 89 (FLYLVNLYFLYQYSTRLETG). At 90–94 (AFDGR) the chain is on the cytoplasmic side. The helical transmembrane segment at 95-115 (PADYLFMLLFNWICIVITGLA) threads the bilayer. The Lumenal segment spans residues 116 to 122 (MDMQLLM). Residues 123–137 (IPLIMSVLYVWAQLN) form a helical membrane-spanning segment. Over 138 to 154 (RDMIVSFWFGTRFKACY) the chain is Cytoplasmic. Residues 155 to 166 (LPWVILGFNYII) form a helical membrane-spanning segment. The Lumenal segment spans residues 167–170 (GGSV). The chain crosses the membrane as a helical span at residues 171–189 (INELIGNLVGHLYFFLMFR). Residues 190–251 (YPMDLGGRNF…WGQGFRLGDQ (62 aa)) lie on the Cytoplasmic side of the membrane. At serine 201 the chain carries Phosphoserine. A Phosphothreonine modification is found at threonine 202. Serine 226 is subject to Phosphoserine. Residues 229-251 (RAADQNGGGGRHNWGQGFRLGDQ) form a disordered region. Residues 241–248 (NWGQGFRL) carry the SHP-box motif.

It belongs to the derlin family. In terms of assembly, homotetramer. The four subunits of the tetramer are arranged in a twofold symmetry. Forms heterooligomers with DERL2 and DERL3; binding to DERL3 is poorer than that between DERL2 and DERL3. Interacts (via SHP-box motif) with VCP. Interacts with AMFR, SELENOS, SEL1L, SELENOK and SYVN1, as well as with SEL1L-SYVN1 and VCP-SELENOS protein complexes; this interaction is weaker than that observed between DERL2 and these complexes. Interacts with NGLY1 and YOD1. Does not bind to EDEM1. Interacts with DNAJB9. Interacts with RNF103. Interacts with HM13. Interacts with XBP1 isoform 1 (via luminal/ectodomain domain); the interaction obviates the need for ectodomain shedding prior HM13/SPP-mediated XBP1 isoform 1 cleavage. Interacts with the signal recognition particle/SRP and the SRP receptor; in the process of endoplasmic reticulum stress-induced pre-emptive quality control. May interact with UBXN6. Interacts with ZFAND2B; probably through VCP. Interacts with CCDC47. Interacts with C18orf32. May interact with TRAM1. Forms a complex with SVIP and VCP/p97. (Microbial infection) Interacts with the cytomegalovirus US11 protein. Ubiquitous.

It localises to the endoplasmic reticulum membrane. Functionally, functional component of endoplasmic reticulum-associated degradation (ERAD) for misfolded lumenal proteins. Forms homotetramers which encircle a large channel traversing the endoplasmic reticulum (ER) membrane. This allows the retrotranslocation of misfolded proteins from the ER into the cytosol where they are ubiquitinated and degraded by the proteasome. The channel has a lateral gate within the membrane which provides direct access to membrane proteins with no need to reenter the ER lumen first. May mediate the interaction between VCP and the misfolded protein. Also involved in endoplasmic reticulum stress-induced pre-emptive quality control, a mechanism that selectively attenuates the translocation of newly synthesized proteins into the endoplasmic reticulum and reroutes them to the cytosol for proteasomal degradation. By controlling the steady-state expression of the IGF1R receptor, indirectly regulates the insulin-like growth factor receptor signaling pathway. In terms of biological role, (Microbial infection) In case of infection by cytomegaloviruses, it plays a central role in the export from the ER and subsequent degradation of MHC class I heavy chains via its interaction with US11 viral protein, which recognizes and associates with MHC class I heavy chains. Also participates in the degradation process of misfolded cytomegalovirus US2 protein. The polypeptide is Derlin-1 (Homo sapiens (Human)).